A 535-amino-acid polypeptide reads, in one-letter code: T-complex protein 1 subunit epsilon (535 aa).

The protein belongs to the TCP-1 chaperonin family. Heterooligomeric complex of about 850 to 900 kDa that forms two stacked rings, 12 to 16 nm in diameter.

Its subcellular location is the cytoplasm. In terms of biological role, molecular chaperone; assists the folding of proteins upon ATP hydrolysis. Known to play a role, in vitro, in the folding of actin and tubulin. This chain is T-complex protein 1 subunit epsilon, found in Avena sativa (Oat).